We begin with the raw amino-acid sequence, 307 residues long: Homoserine O-acetyltransferase (307 aa).

C142 serves as the catalytic Acyl-thioester intermediate. The substrate site is built by K163 and S192. The Proton acceptor role is filled by H235. Residue E237 is part of the active site. R249 contributes to the substrate binding site.

The protein belongs to the MetA family.

The protein resides in the cytoplasm. It catalyses the reaction L-homoserine + acetyl-CoA = O-acetyl-L-homoserine + CoA. Its pathway is amino-acid biosynthesis; L-methionine biosynthesis via de novo pathway; O-acetyl-L-homoserine from L-homoserine: step 1/1. In terms of biological role, transfers an acetyl group from acetyl-CoA to L-homoserine, forming acetyl-L-homoserine. This Rhizobium johnstonii (strain DSM 114642 / LMG 32736 / 3841) (Rhizobium leguminosarum bv. viciae) protein is Homoserine O-acetyltransferase.